Reading from the N-terminus, the 599-residue chain is MQKNIRNFSIIAHIDHGKSTLADRLLHLTGALSDREMKEQFLDKMELEREKGITIKLKPVRLNYRARDGQEYILNLIDTPGHVDFSYEVSRSLAACEGALLVVDASQGIEAQTLANVYMAMDLDLEIIGVVNKIDLPGAEPEVVKQEMENVLGLDQDEVLPISAKLGTGVEDVLEAIVERIPPPSGDKEAALKALIFDSYFDPYKGAISYIRVVEGELRQGDMIRMMSSGKEYEVDEIGVLSPYMTEVEVLSSGEVGYVAAGMKNVNDTRVGDTITGARRAAPEALSGYQEVKPMVYCGLYPLENSEFERLRDALDRLKLNDASLFYEPDNSDALGFGFRCGFLGLLHLEIVKERLEREYDLSLLATAPSVIYRVLLTDGSELMVQNPTHWPPPQKIDRVMEPYVKASIMVPNDYVGTIMELCQEKRGSFITMEYLTSHRVVINYRLPLAEILYDFFDALKSRTRGYASLDYEFHGFDTSDLIKLDIMLNGEVVDALSFIVHEDKAYYRARAIVNKLRKIIPRQMYEVAIQAAIGNRILARENIKAMRKDVLAKCYGGDITRKKKLLEKQKEGKKRMKQIGRVEVPKDAFMTVLDIEND.

Residues 3 to 185 (KNIRNFSIIA…AIVERIPPPS (183 aa)) enclose the tr-type G domain. GTP is bound by residues 15–20 (DHGKST) and 132–135 (NKID).

This sequence belongs to the TRAFAC class translation factor GTPase superfamily. Classic translation factor GTPase family. LepA subfamily.

It is found in the cell membrane. The catalysed reaction is GTP + H2O = GDP + phosphate + H(+). Its function is as follows. Required for accurate and efficient protein synthesis under certain stress conditions. May act as a fidelity factor of the translation reaction, by catalyzing a one-codon backward translocation of tRNAs on improperly translocated ribosomes. Back-translocation proceeds from a post-translocation (POST) complex to a pre-translocation (PRE) complex, thus giving elongation factor G a second chance to translocate the tRNAs correctly. Binds to ribosomes in a GTP-dependent manner. This chain is Elongation factor 4, found in Syntrophomonas wolfei subsp. wolfei (strain DSM 2245B / Goettingen).